The following is a 686-amino-acid chain: MADRDVQARAAALRREIERHNYAYYVLDAPTIPDAEYDRLYHELEALEAAHPELVAADSPTRRVGGQPLAGFKPVRHAVPMLSIRTETDTTAAGARAFDVRVRKELGLAPADPPVEYAAELKFDGLAINLRYEAGVLVAAATRGDGETGEDVTQNVRTVRTIPLRLHGDAPPAVLEVRGEVFMRRDDFERYNAQQRAAGKPTLVNPRNGAAGSIRQLDPAIAGQRPLSFYAYGLGEVVGWPDAPATHGATLDALQGLGVPVSAERCVCNGVDDLIAFHDDIAARRDQLPFDIDGVVYKVNAFALQRELGFLTREPRWAVAHKYPAQEQLTTVLGIGVHVGRTGALTPVARLAPVFVGGVTVTNATLHNQDEIDRKDTRVGDTVIVRRAGDVIPEIVATVLERRPQPEPPRFNILQSYPVCPECGSHVVRLEGEAVARCTGGLYCPAQRKQALLHFASRRAMDIDGVGEKLVDQLVSRELVRTPADLYRLPLETLAGLERMAEKSARNLIQAIETSKSTTLARFIYALGIRNVGETTARDLARHFGALDALLGANETALLGVRDVGPIVAQSIAQFFAEPHNLEVVGKLRALGVHWPETTGMQQSGGILSGKTLVLTGTLPALTRDQAKERIESAGGKVAGSVSKKTDYVVAGEEAGSKLAKARELGVTILDEEELLALLGSNKKNG.

NAD(+) contacts are provided by residues 34–38 (DAEYD), 83–84 (SI), and Glu-120. Residue Lys-122 is the N6-AMP-lysine intermediate of the active site. Arg-143, Glu-180, Lys-298, and Lys-322 together coordinate NAD(+). The Zn(2+) site is built by Cys-420, Cys-423, Cys-438, and Cys-444. A BRCT domain is found at 603-686 (QSGGILSGKT…ALLGSNKKNG (84 aa)).

Belongs to the NAD-dependent DNA ligase family. LigA subfamily. Mg(2+) is required as a cofactor. The cofactor is Mn(2+).

It catalyses the reaction NAD(+) + (deoxyribonucleotide)n-3'-hydroxyl + 5'-phospho-(deoxyribonucleotide)m = (deoxyribonucleotide)n+m + AMP + beta-nicotinamide D-nucleotide.. Its function is as follows. DNA ligase that catalyzes the formation of phosphodiester linkages between 5'-phosphoryl and 3'-hydroxyl groups in double-stranded DNA using NAD as a coenzyme and as the energy source for the reaction. It is essential for DNA replication and repair of damaged DNA. The protein is DNA ligase of Thiobacillus denitrificans (strain ATCC 25259 / T1).